Reading from the N-terminus, the 283-residue chain is Acetylglutamate kinase (283 aa).

Substrate contacts are provided by residues 63-64 (GG), Arg85, and Asn178.

It belongs to the acetylglutamate kinase family. ArgB subfamily.

The protein localises to the plastid. Its subcellular location is the chloroplast. It carries out the reaction N-acetyl-L-glutamate + ATP = N-acetyl-L-glutamyl 5-phosphate + ADP. The protein operates within amino-acid biosynthesis; L-arginine biosynthesis; N(2)-acetyl-L-ornithine from L-glutamate: step 2/4. Catalyzes the ATP-dependent phosphorylation of N-acetyl-L-glutamate. The protein is Acetylglutamate kinase of Porphyra purpurea (Red seaweed).